The primary structure comprises 649 residues: Mediator of RNA polymerase II transcription subunit 17 (649 aa).

Residues 51–79 (QGSGSEEEEAAGPDGDAPDWGGAGADQDD) form a disordered region.

This sequence belongs to the Mediator complex subunit 17 family. In terms of assembly, component of the Mediator complex, which is composed of MED1, MED4, MED6, MED7, MED8, MED9, MED10, MED11, MED12, MED13, MED13L, MED14, MED15, MED16, MED17, MED18, MED19, MED20, MED21, MED22, MED23, MED24, MED25, MED26, MED27, MED29, MED30, MED31, CCNC, CDK8 and CDC2L6/CDK11. The MED12, MED13, CCNC and CDK8 subunits form a distinct module termed the CDK8 module. Mediator containing the CDK8 module is less active than Mediator lacking this module in supporting transcriptional activation. Individual preparations of the Mediator complex lacking one or more distinct subunits have been variously termed ARC, CRSP, DRIP, PC2, SMCC and TRAP. Interacts with STAT2. Interacts with GATA1 and PPARG.

The protein localises to the nucleus. Its function is as follows. Component of the Mediator complex, a coactivator involved in the regulated transcription of nearly all RNA polymerase II-dependent genes. Mediator functions as a bridge to convey information from gene-specific regulatory proteins to the basal RNA polymerase II transcription machinery. Mediator is recruited to promoters by direct interactions with regulatory proteins and serves as a scaffold for the assembly of a functional preinitiation complex with RNA polymerase II and the general transcription factors. This is Mediator of RNA polymerase II transcription subunit 17 (Med17) from Mus musculus (Mouse).